Consider the following 361-residue polypeptide: MTPTLRRKLEALAERREELQHLLSDPEVVSNNDKFRSLSRELSQLEPVALAMQEEARAKADLSAAEAMRNDPEMRELAEEEILAAQARLDELDAQLALLLVPRDPRDEGNLFLEVRAGTGGDEAAIFAGDLFRMYARYAERQGWKVEIESDSPGEHGGYKEVVARVVGRGAYSRLKFESGTHRVQRVPATESQGRIHTSAATVAIIPEADDVEEIVINPADLKVDTFRSSGAGGQHVNKTESAIRITHVPSGVVVECQTERSQHANRDKAMKRLKAQLVEAERSKAAAAEAQTRKLQVGSGDRSQRIRTYSFPQGRITDHRVEGLTLYDLPNIIEGDLDALIARLLHEHQADELARLSEGT.

N5-methylglutamine is present on Gln235.

It belongs to the prokaryotic/mitochondrial release factor family. Methylated by PrmC. Methylation increases the termination efficiency of RF1.

It localises to the cytoplasm. Peptide chain release factor 1 directs the termination of translation in response to the peptide chain termination codons UAG and UAA. The sequence is that of Peptide chain release factor 1 from Xanthomonas campestris pv. campestris (strain B100).